The following is a 298-amino-acid chain: Rhodomycin D methylesterase DauP (298 aa).

Positions 25–277 constitute an AB hydrolase-1 domain; sequence PLLLIAGGNL…VEIENMGHAL (253 aa).

It belongs to the methyl esterase DnrP family.

It catalyses the reaction rhodomycin D + H2O = 10-carboxy-13-deoxycarminomycin + methanol + H(+). It carries out the reaction 4-O-methylrhodomycin D + H2O = 10-carboxy-13-deoxydaunorubicin + methanol + H(+). Its pathway is antibiotic biosynthesis; daunorubicin biosynthesis. It functions in the pathway antibiotic biosynthesis; carminomycin biosynthesis. In terms of biological role, involved in the biosynthesis of the anthracyclines carminomycin and daunorubicin (daunomycin) which are aromatic polyketide antibiotics that exhibit high cytotoxicity and are widely applied in the chemotherapy of a variety of cancers. Catalyzes the removal of methyl group from the carbomethoxy group of rhodomycin D (10-carbomethoxy-13-deoxycarminomycin) and 4-O-methylrhodomycin D to yield 10-carboxy-13-deoxycarminomycin and 10-carboxy-13-deoxydaunorubicin, respectively. Could be also involved in the decarboxylation of 10-carboxy-13-deoxycarminomycin and 10-carboxy-13-deoxydaunorubicin to yield 13-deoxycarminomycin and 13-deoxydaunorubicin, respectively. It seems that DauK may influence the ability of DauP to carry out the decarboxylation. The polypeptide is Rhodomycin D methylesterase DauP (dauP) (Streptomyces sp. (strain C5)).